The sequence spans 156 residues: MPRRGPVAKRDVLPDPIYNSKLVTRLINKIMIDGKKSKAQKILYTAFDIIRERTGKDPMEVFEQALKNVMPVLEVRARRVGGANYQVPVEVRPDRRVSLGLRWLVQYARLRNEKTMEERLANEIMDAANNTGAAVKKREDTHKMAEANRAFAHYRW.

The protein belongs to the universal ribosomal protein uS7 family. As to quaternary structure, part of the 30S ribosomal subunit. Contacts proteins S9 and S11.

One of the primary rRNA binding proteins, it binds directly to 16S rRNA where it nucleates assembly of the head domain of the 30S subunit. Is located at the subunit interface close to the decoding center, probably blocks exit of the E-site tRNA. This Geobacillus kaustophilus (strain HTA426) protein is Small ribosomal subunit protein uS7.